A 454-amino-acid polypeptide reads, in one-letter code: tRNA modification GTPase MnmE (454 aa).

Residues arginine 23, glutamate 80, and lysine 120 each contribute to the (6S)-5-formyl-5,6,7,8-tetrahydrofolate site. The TrmE-type G domain occupies 216–377 (GMKVVIAGRP…LRNHLKQSMG (162 aa)). A K(+)-binding site is contributed by asparagine 226. GTP is bound by residues 226 to 231 (NAGKSS), 245 to 251 (TDIAGTT), 270 to 273 (DTAG), 335 to 338 (NKAD), and 358 to 360 (SAR). Serine 230 is a binding site for Mg(2+). K(+)-binding residues include threonine 245, isoleucine 247, and threonine 250. Threonine 251 serves as a coordination point for Mg(2+). Lysine 454 serves as a coordination point for (6S)-5-formyl-5,6,7,8-tetrahydrofolate.

This sequence belongs to the TRAFAC class TrmE-Era-EngA-EngB-Septin-like GTPase superfamily. TrmE GTPase family. Homodimer. Heterotetramer of two MnmE and two MnmG subunits. K(+) is required as a cofactor.

Its subcellular location is the cytoplasm. Its function is as follows. Exhibits a very high intrinsic GTPase hydrolysis rate. Involved in the addition of a carboxymethylaminomethyl (cmnm) group at the wobble position (U34) of certain tRNAs, forming tRNA-cmnm(5)s(2)U34. The polypeptide is tRNA modification GTPase MnmE (Shigella sonnei (strain Ss046)).